Reading from the N-terminus, the 173-residue chain is Large ribosomal RNA subunit accumulation protein YceD (173 aa).

The protein belongs to the DUF177 domain family.

Its function is as follows. Plays a role in synthesis, processing and/or stability of 23S rRNA. This Escherichia coli O157:H7 protein is Large ribosomal RNA subunit accumulation protein YceD (yceD).